The chain runs to 499 residues: MASSVFSRFSIYFCVLLLCHGSMAQLFNPSTNPWHSPRQGSFRECRFDRLQAFEPLRKVRSEAGVTEYFDEKNELFQCTGTFVIRRVIQPQGLLVPRYTNIPGVVYIIQGRGSMGLTFPGCPATYQQQFQQFSSQGQSQSQKFRDEHQKIHQFRQGDIVALPAGVAHWFYNDGDAPIVAVYVYDVNNNANQLEPRQKEFLLAGNNNRAQQQQVYGSSIEQHSGQNIFSGFGVEMLSEALGINAVAAKRLQSQNDQRGEIIHVKNGLQLLKPTLTQQQEQAQAQDQYQQVQYSERQQTSSRWNGLEENFCTIKVRVNIENPSRADSYNPRAGRITSVNSQKFPILNLIQMSATRVNLYQNAILSPFWNVNAHSLVYMIQGRSRVQVVSNFGKTVFDGVLRPGQLLIIPQHYAVLKKAEREGCQYIAIKTNANAFVSHLAGKNSVFRALPVDVVANAYRISREQARSLKNNRGEEHGAFTPRFQQQYYPGLSNESESETSE.

Residues 1–24 (MASSVFSRFSIYFCVLLLCHGSMA) form the signal peptide. 2 cysteine pairs are disulfide-bonded: cysteine 45-cysteine 78 and cysteine 121-cysteine 309. Cupin type-1 domains are found at residues 50 to 247 (LQAF…VAAK) and 315 to 464 (VNIE…EQAR). Residues 467–499 (KNNRGEEHGAFTPRFQQQYYPGLSNESESETSE) form a disordered region.

This sequence belongs to the 11S seed storage protein (globulins) family. As to quaternary structure, hexamer; each subunit is composed of an acidic and a basic chain derived from a single precursor and linked by a disulfide bond.

In terms of biological role, seed storage protein. The chain is Glutelin type-B 1 (GluB1-A) from Oryza sativa subsp. japonica (Rice).